Here is a 388-residue protein sequence, read N- to C-terminus: G2/mitotic-specific cyclin-B2 (388 aa).

The interval 46–67 (ATNGKVGPSKKPSKASCVQKPK) is disordered.

This sequence belongs to the cyclin family. Cyclin AB subfamily. As to quaternary structure, interacts with the CDK1 protein kinase to form a serine/threonine kinase holoenzyme complex also known as maturation promoting factor (MPF). The cyclin subunit imparts substrate specificity to the complex.

In terms of biological role, essential for the control of the cell cycle at the G2/M (mitosis) transition. This is G2/mitotic-specific cyclin-B2 (ccnb2) from Oryzias curvinotus (Hynann ricefish).